A 529-amino-acid chain; its full sequence is MSSNLGKEKDCKEKDPKVPSSKEREKESKASGGFGKESKEKEPKTKGKDAKDGKKDSSSTQPGVAFSVDNTIKRPNPATGTRKKSSNAEVIKELNKCREENSMRLDLAKRSIHMLPSAVKELTQLTELYLYSNKLQSLPAEVGCLVNLVTLALSENSLTSLPDSLDNLKKLRMLDLRHNKLREIPSVVYRLTSLATLYLRFNRITTVEKDIKTLSKLTMLSIRENKIKQLPAEIGELCNLITLDVAHNQLEHLPEEIGSCTQITNLDLQHNELLDLPETIGNLSSLSRLGLRYNRLSAIPKSLAKCSELDELNLENNNISTLPEGLLSSLVKLTSLTLARNCFQSYPVGGPSQFSTIYSLNMEHNRINKIPFGIFSRAKVLSKLNMKDNQLTSLPLDFGTWTSMVELNLATNQLTKIPEDVSGLVSLEVLILSNNLLKKLPHGIGNLRKLRELDLEENKLESLPNEIAYLKDLQKLVLTNNQLTTLPRGIGHLTNLTHLGLGENLLTHLPEEIGKILFFFFFNVSFLFV.

2 stretches are compositionally biased toward basic and acidic residues: residues 1–29 and 36–57; these read MSSN…KESK and KESK…KKDS. Residues 1–87 form a disordered region; the sequence is MSSNLGKEKD…ATGTRKKSSN (87 aa). LRR repeat units follow at residues 99–122, 123–145, 146–168, 169–191, 193–214, 215–237, 239–260, 262–283, 284–306, 307–329, 331–353, 354–377, 379–400, 401–424, 425–447, 448–471, 473–493, and 494–516; these read EENS…VKEL, TQLT…VGCL, VNLV…LDNL, KKLR…VYRL, SLAT…IKTL, SKLT…IGEL, NLIT…IGSC, QITN…IGNL, SSLS…LAKC, SELD…LLSS, VKLT…GPSQ, FSTI…IFSR, KVLS…DFGT, WTSM…VSGL, VSLE…IGNL, RKLR…AYLK, LQKL…IGHL, and TNLT…IGKI.

This sequence belongs to the SHOC2 family.

The protein resides in the cytoplasm. The protein localises to the nucleus. Functionally, core component of the SHOC2-MRAS-PP1c (SMP) holophosphatase complex that regulates activation of the MAPK pathway. Acts as a scaffolding protein in the SMP complex. The SMP complex specifically dephosphorylates the inhibitory phosphorylation Raf kinases, stimulating their kinase activities. The SMP complex enhances the dephosphorylation activity and substrate specificity of PP1c. In Gallus gallus (Chicken), this protein is Leucine-rich repeat protein SHOC-2 (SHOC2).